A 611-amino-acid chain; its full sequence is MPAYRSRTTTHGRNMAGARGLWRATGMKDGDFGKPIIAVVNSFTQFVPGHVHLKDLGQLVAREIEAAGGVAKEFNTIAVDDGIAMGHDGMLYSLPSREIIADSVEYMVNAHCADAMVCISNCDKITPGMLMASLRLNIPTVFVSGGPMEAGKVVMHGKKVALDLVDAMVAAADDKISDEDVATIERSACPTCGSCSGMFTANSMNCLTEALGLSLPGNGSTLATHSDRKRLFVEAGHLIVDITRRYYEQDDENVLPRNIASKQAFENAMALDIAMGGSTNTVLHILAAAYEGEIDFNLDDIDQLSRRVPCLSKVAPAKQDVHMEDVHRAGGIMRILGELDRGGLINRDCPTVHAPTLGDAIDRWDITRTNSETVREFFRAAPGGVPTQVAFSQSSRWDELDMDRENGVIRSVEKPFSKDGGLAVLKGNIALDGCIVKTAGVDESILKFTGPAKVYESQDSAVKAILSNEVVAGDVVVIRYEGPKGGPGMQEMLYPTSYLKSKGLGKVCALITDGRFSGGTSGLSIGHVSPEAANGGTIGLVRNGDTIAIDIPNRTIELMLSEGELAARRVSQDAAGWKPAEHRKRKVTTALKAYAAFATSADLGAVRKLPE.

D81 provides a ligand contact to Mg(2+). [2Fe-2S] cluster is bound at residue C122. Mg(2+) is bound by residues D123 and K124. K124 carries the post-translational modification N6-carboxylysine. Position 195 (C195) interacts with [2Fe-2S] cluster. A Mg(2+)-binding site is contributed by E491. The Proton acceptor role is filled by S517.

It belongs to the IlvD/Edd family. As to quaternary structure, homodimer. Requires [2Fe-2S] cluster as cofactor. Mg(2+) serves as cofactor.

It catalyses the reaction (2R)-2,3-dihydroxy-3-methylbutanoate = 3-methyl-2-oxobutanoate + H2O. The enzyme catalyses (2R,3R)-2,3-dihydroxy-3-methylpentanoate = (S)-3-methyl-2-oxopentanoate + H2O. The protein operates within amino-acid biosynthesis; L-isoleucine biosynthesis; L-isoleucine from 2-oxobutanoate: step 3/4. Its pathway is amino-acid biosynthesis; L-valine biosynthesis; L-valine from pyruvate: step 3/4. Functions in the biosynthesis of branched-chain amino acids. Catalyzes the dehydration of (2R,3R)-2,3-dihydroxy-3-methylpentanoate (2,3-dihydroxy-3-methylvalerate) into 2-oxo-3-methylpentanoate (2-oxo-3-methylvalerate) and of (2R)-2,3-dihydroxy-3-methylbutanoate (2,3-dihydroxyisovalerate) into 2-oxo-3-methylbutanoate (2-oxoisovalerate), the penultimate precursor to L-isoleucine and L-valine, respectively. The polypeptide is Dihydroxy-acid dehydratase (Allorhizobium ampelinum (strain ATCC BAA-846 / DSM 112012 / S4) (Agrobacterium vitis (strain S4))).